The chain runs to 550 residues: Urocanate hydratase (550 aa).

NAD(+) contacts are provided by residues 48–49, Gln126, 172–174, Glu192, Arg197, 238–239, 259–263, 268–269, and Tyr317; these read GG, GMG, NA, QTSAH, and YL. Residue Cys405 is part of the active site. Gly487 serves as a coordination point for NAD(+).

The protein belongs to the urocanase family. Requires NAD(+) as cofactor.

It localises to the cytoplasm. It carries out the reaction 4-imidazolone-5-propanoate = trans-urocanate + H2O. Its pathway is amino-acid degradation; L-histidine degradation into L-glutamate; N-formimidoyl-L-glutamate from L-histidine: step 2/3. Catalyzes the conversion of urocanate to 4-imidazolone-5-propionate. This Saccharopolyspora erythraea (strain ATCC 11635 / DSM 40517 / JCM 4748 / NBRC 13426 / NCIMB 8594 / NRRL 2338) protein is Urocanate hydratase.